Consider the following 641-residue polypeptide: tRNA 5-methylaminomethyl-2-thiouridine biosynthesis bifunctional protein MnmC (641 aa).

Residues 1-219 are tRNA (mnm(5)s(2)U34)-methyltransferase; the sequence is MTVSKILKQI…PYPICSAAVT (219 aa). Residues 232-641 are FAD-dependent cmnm(5)s(2)U34 oxidoreductase; it reads IGGGVASACL…GKALEVGVEV (410 aa).

The protein in the N-terminal section; belongs to the methyltransferase superfamily. tRNA (mnm(5)s(2)U34)-methyltransferase family. In the C-terminal section; belongs to the DAO family. FAD serves as cofactor.

The protein localises to the cytoplasm. The catalysed reaction is 5-aminomethyl-2-thiouridine(34) in tRNA + S-adenosyl-L-methionine = 5-methylaminomethyl-2-thiouridine(34) in tRNA + S-adenosyl-L-homocysteine + H(+). Functionally, catalyzes the last two steps in the biosynthesis of 5-methylaminomethyl-2-thiouridine (mnm(5)s(2)U) at the wobble position (U34) in tRNA. Catalyzes the FAD-dependent demodification of cmnm(5)s(2)U34 to nm(5)s(2)U34, followed by the transfer of a methyl group from S-adenosyl-L-methionine to nm(5)s(2)U34, to form mnm(5)s(2)U34. The protein is tRNA 5-methylaminomethyl-2-thiouridine biosynthesis bifunctional protein MnmC of Shewanella pealeana (strain ATCC 700345 / ANG-SQ1).